Reading from the N-terminus, the 310-residue chain is Phosphoribosylaminoimidazole-succinocarboxamide synthase (310 aa).

The protein belongs to the SAICAR synthetase family.

It carries out the reaction 5-amino-1-(5-phospho-D-ribosyl)imidazole-4-carboxylate + L-aspartate + ATP = (2S)-2-[5-amino-1-(5-phospho-beta-D-ribosyl)imidazole-4-carboxamido]succinate + ADP + phosphate + 2 H(+). It functions in the pathway purine metabolism; IMP biosynthesis via de novo pathway; 5-amino-1-(5-phospho-D-ribosyl)imidazole-4-carboxamide from 5-amino-1-(5-phospho-D-ribosyl)imidazole-4-carboxylate: step 1/2. The protein is Phosphoribosylaminoimidazole-succinocarboxamide synthase of Xanthomonas oryzae pv. oryzae (strain MAFF 311018).